The sequence spans 171 residues: Large ribosomal subunit protein uL10 (171 aa).

This sequence belongs to the universal ribosomal protein uL10 family. In terms of assembly, part of the ribosomal stalk of the 50S ribosomal subunit. The N-terminus interacts with L11 and the large rRNA to form the base of the stalk. The C-terminus forms an elongated spine to which L12 dimers bind in a sequential fashion forming a multimeric L10(L12)X complex.

In terms of biological role, forms part of the ribosomal stalk, playing a central role in the interaction of the ribosome with GTP-bound translation factors. This chain is Large ribosomal subunit protein uL10, found in Rhizorhabdus wittichii (strain DSM 6014 / CCUG 31198 / JCM 15750 / NBRC 105917 / EY 4224 / RW1) (Sphingomonas wittichii).